A 427-amino-acid polypeptide reads, in one-letter code: UDP-N-acetylglucosamine 1-carboxyvinyltransferase (427 aa).

22-23 (KN) is a phosphoenolpyruvate binding site. R99 contributes to the UDP-N-acetyl-alpha-D-glucosamine binding site. Catalysis depends on C123, which acts as the Proton donor. C123 carries the 2-(S-cysteinyl)pyruvic acid O-phosphothioketal modification. Residues 128–132 (RPIDL), D313, and I335 contribute to the UDP-N-acetyl-alpha-D-glucosamine site.

Belongs to the EPSP synthase family. MurA subfamily.

It localises to the cytoplasm. It carries out the reaction phosphoenolpyruvate + UDP-N-acetyl-alpha-D-glucosamine = UDP-N-acetyl-3-O-(1-carboxyvinyl)-alpha-D-glucosamine + phosphate. The protein operates within cell wall biogenesis; peptidoglycan biosynthesis. In terms of biological role, cell wall formation. Adds enolpyruvyl to UDP-N-acetylglucosamine. The sequence is that of UDP-N-acetylglucosamine 1-carboxyvinyltransferase from Novosphingobium aromaticivorans (strain ATCC 700278 / DSM 12444 / CCUG 56034 / CIP 105152 / NBRC 16084 / F199).